Here is a 171-residue protein sequence, read N- to C-terminus: Ribosome maturation factor RimM (171 aa).

Positions 96–170 (AEGEYYYHEI…LVTIHVMEGL (75 aa)) constitute a PRC barrel domain.

The protein belongs to the RimM family. As to quaternary structure, binds ribosomal protein uS19.

It is found in the cytoplasm. Its function is as follows. An accessory protein needed during the final step in the assembly of 30S ribosomal subunit, possibly for assembly of the head region. Essential for efficient processing of 16S rRNA. May be needed both before and after RbfA during the maturation of 16S rRNA. It has affinity for free ribosomal 30S subunits but not for 70S ribosomes. In Bacillus mycoides (strain KBAB4) (Bacillus weihenstephanensis), this protein is Ribosome maturation factor RimM.